The sequence spans 354 residues: MATEQIQHIAIVGCVHGKYREMYRQLSEYEKSTGKEISFVICTGDMQTLRYEADLVYLKVPPKYKQMGDFHLYYEGKEKAPYLTLFIGGNHESSNVLLHLYNGGFVCFNMYYLGVCSCININGLRIVGVSGIYKSFDEKKPYTYPPSPNDVVSLFHTRNYVIQMLSNLSQSSQIDISLSHDWPQGIVMKGNYKQLYRFQPGFKKDGASLGSPINKVILNTLKPKYWISGHMHCEYHAEEGPTHFIALGKIGYKNAISYLDLPLKQKTDLEYDKDWVCNLIMTWPAFSNKAQFPDLSYSISELLSKRTKELDKKIIELWEKYIGLKIIYDSDTFDIQFTSRRFYIEKIYNELNIN.

The a divalent metal cation site is built by Cys14, His16, and Asp45. Lys59, Asn90, His91, Lys134, and His156 together coordinate RNA. Asn90 provides a ligand contact to a divalent metal cation. The interval 130-158 (SGIYKSFDEKKPYTYPPSPNDVVSLFHTR) is lariat recognition loop. His180 contributes to the a divalent metal cation binding site. RNA is bound by residues Gly201, Asp205, His230, Met231, and His232. His230 contacts a divalent metal cation. His232 is an a divalent metal cation binding site.

The protein belongs to the lariat debranching enzyme family. Fe(2+) is required as a cofactor. It depends on Zn(2+) as a cofactor. The cofactor is Mn(2+).

Its subcellular location is the cytoplasm. It is found in the perinuclear region. Active in presence of diverse metals including Fe(2+), Zn(2+) and Mn(2+). Binds two metal cations in two adjacent alpha and beta metal-binding pockets. The activity is the highest with Fe(2+) bound to the 2 metal-binding sites. The activity is slightly lower with Fe(2+) bound to the beta site and Zn(2+) to the alpha site and decreases further when only Zn(2+) is bound. No activity with Mn(2+). However, another study showed activity with Mn(2+) bound to the beta site and Zn(2+) to the alpha site. Mn(2+) appears unable to bind to the alpha site. In terms of biological role, cleaves the 2'-5' phosphodiester linkage at the branch point of excised lariat intron RNA and converts them into linear molecules that can be subsequently degraded, thereby facilitating ribonucleotide turnover. This chain is Lariat debranching enzyme, found in Entamoeba histolytica (strain ATCC 30459 / HM-1:IMSS / ABRM).